The chain runs to 595 residues: Beta-lactamase-like protein ARB_00930 (595 aa).

An N-terminal signal peptide occupies residues 1–18; sequence MVVCFLWLLLPYAATTLS. Residues N70 and N102 are each glycosylated (N-linked (GlcNAc...) asparagine). The active-site Acyl-ester intermediate is S117. Residues N147, N156, and N195 are each glycosylated (N-linked (GlcNAc...) asparagine). Y235 acts as the Proton acceptor in catalysis. N-linked (GlcNAc...) asparagine glycans are attached at residues N249, N461, and N473.

This sequence belongs to the beta-lactamase family.

The protein localises to the secreted. The catalysed reaction is a beta-lactam + H2O = a substituted beta-amino acid. The polypeptide is Beta-lactamase-like protein ARB_00930 (Arthroderma benhamiae (strain ATCC MYA-4681 / CBS 112371) (Trichophyton mentagrophytes)).